The primary structure comprises 184 residues: V-type proton ATPase subunit E (184 aa).

This sequence belongs to the V-ATPase E subunit family.

Produces ATP from ADP in the presence of a proton gradient across the membrane. This is V-type proton ATPase subunit E from Finegoldia magna (strain ATCC 29328 / DSM 20472 / WAL 2508) (Peptostreptococcus magnus).